Consider the following 794-residue polypeptide: MKGSSESSSRGLNNTSGVSEFCTDGSKSLSHIDYVRSLLGSHKEANLGGLDDDSIVRALECEDVSLRQWLDNPDRSVDAFECFHVFRQIVEIVNAAHSQGIVVHNVRPSCFVMSSFNNVSFIESASCSDSGSDEDATTKSREIGSSRQEEILSERRSKQQEEVKKQPFPMKQILAMEMSWYTSHEEDNGSLCNCASDIYRLGVLLFELFCPVSSREEKSRTMSSLRHRVLPPQILLNWPKEASFCLWLLHPEPSCRPSMSELLQSEFINEPRENLEEREAAMELRDRIEEQELLLEFLFLIQQRKQEAADKLQDTISLLSSDIDQVVKRQLVLQQKGRDVRSFLASRKRIRQGAETTAAEEENDDNSIDEESKLDDTLESTLLESSRLMRNLKKLESVYFATRYRQIKAATAAEKPLARYYSALSCNGRSSEKSSMSQPSKDPINDSRQGGWIDPFLEGLCKYLSFSKLRVKADLKQGDLLNSSNLVCAIGFDRDGEFFATAGVNKKIKIFECESIIKDGRDIHYPVVELASRSKLSGICWNSYIKSQVASSNFEGVVQVWDVARNQLVTEMKEHEKRVWSIDYSSADPTLLASGSDDGSVKLWSINQGVSIGTIKTKANICCVQFPSETGRSLAFGSADHKVYYYDLRNPKLPLCTMIGHHKTVSYVRFVDSSTLVSSSTDNTLKLWDLSMSISGINETPLHSFMGHTNVKNFVGLSVSDGYIATGSETNEVFVYHKAFPMPVLSYKFKTIDPVSELEVDDASQFISSVCWRGQSSTLVAANSTGNIKILEMV.

Positions 1 to 268 (MKGSSESSSR…MSELLQSEFI (268 aa)) constitute a Protein kinase domain. Residues 126–165 (SCSDSGSDEDATTKSREIGSSRQEEILSERRSKQQEEVKK) are disordered. A compositionally biased stretch (basic and acidic residues) spans 136–165 (ATTKSREIGSSRQEEILSERRSKQQEEVKK). Residues 272-326 (RENLEEREAAMELRDRIEEQELLLEFLFLIQQRKQEAADKLQDTISLLSSDIDQV) adopt a coiled-coil conformation. Disordered stretches follow at residues 352–373 (QGAETTAAEEENDDNSIDEESK) and 428–447 (GRSSEKSSMSQPSKDPINDS). Residues 358-369 (AAEEENDDNSID) show a composition bias toward acidic residues. WD repeat units lie at residues 482–521 (NSSNLVCAIGFDRDGEFFATAGVNKKIKIFECESIIKDGR), 531–571 (ASRS…LVTE), 574–614 (EHEK…SIGT), 616–656 (KTKA…LPLC), 660–698 (GHHKTVSYVRFVDSSTLVSSSTDNTLKLWDLSMSISGIN), 707–746 (GHTNVKNFVGLSVSDGYIATGSETNEVFVYHKAFPMPVLS), and 762–794 (DASQFISSVCWRGQSSTLVAANSTGNIKILEMV). The DWD box motif lies at 635 to 649 (AFGSADHKVYYYDLR).

In terms of assembly, interacts with COP1 and CO. Binds to CRY1 in response to blue light, this interaction prevents SPA1/COP1 complex formation and thus avoid COP1-dependent degradation of the transcription factor HY5 by the proteasome and promotes hypocotyl elongation.

It localises to the nucleus. Functionally, repressor of photomorphogenesis in the light. Probably part of the COP1/SPA E3 ubiquitin-protein ligase complex. The chain is Protein SPA1-RELATED 4 (SPA4) from Arabidopsis thaliana (Mouse-ear cress).